The chain runs to 213 residues: 3-isopropylmalate dehydratase small subunit (213 aa).

Belongs to the LeuD family. LeuD type 1 subfamily. Heterodimer of LeuC and LeuD.

It catalyses the reaction (2R,3S)-3-isopropylmalate = (2S)-2-isopropylmalate. The protein operates within amino-acid biosynthesis; L-leucine biosynthesis; L-leucine from 3-methyl-2-oxobutanoate: step 2/4. Its function is as follows. Catalyzes the isomerization between 2-isopropylmalate and 3-isopropylmalate, via the formation of 2-isopropylmaleate. The sequence is that of 3-isopropylmalate dehydratase small subunit from Pseudomonas savastanoi pv. phaseolicola (strain 1448A / Race 6) (Pseudomonas syringae pv. phaseolicola (strain 1448A / Race 6)).